The primary structure comprises 109 residues: Class I hydrophobin G (109 aa).

The signal sequence occupies residues 1–19 (MRLSILSVFSLVGAGMVSA). 4 cysteine pairs are disulfide-bonded: cysteine 36-cysteine 90, cysteine 42-cysteine 84, cysteine 43-cysteine 76, and cysteine 91-cysteine 105.

Belongs to the fungal hydrophobin family.

The protein localises to the secreted. Its subcellular location is the cell wall. Aerial growth, conidiation, and dispersal of filamentous fungi in the environment rely upon a capability of their secreting small amphipathic proteins called hydrophobins (HPBs) with low sequence identity. Class I can self-assemble into an outermost layer of rodlet bundles on aerial cell surfaces, conferring cellular hydrophobicity that supports fungal growth, development and dispersal; whereas Class II form highly ordered films at water-air interfaces through intermolecular interactions but contribute nothing to the rodlet structure. In P.expansum, hydrophobins contribute to germination, tolerance to cold stress and mycotoxins patulin and citrinin production. This Penicillium expansum (Blue mold rot fungus) protein is Class I hydrophobin G.